A 324-amino-acid chain; its full sequence is Ig gamma-1 chain C region secreted form (324 aa).

Residues 1–97 (AKTTPPSVYP…ASSTKVDKKI (97 aa)) form a CH1 region. An intrachain disulfide couples cysteine 27 to cysteine 82. A hinge region spans residues 98–110 (VPRDCGCKPCICT). A CH2 region spans residues 111-217 (VPEVSSVFIF…PIEKTISKTK (107 aa)). 2 disulfide bridges follow: cysteine 138–cysteine 198 and cysteine 244–cysteine 302. Asparagine 174 carries an N-linked (GlcNAc...) asparagine glycan. The CH3 stretch occupies residues 218-324 (GRPKAPQVYT…EKSLSHSPGK (107 aa)).

It is found in the secreted. This Mus musculus (Mouse) protein is Ig gamma-1 chain C region secreted form (Ighg1).